Reading from the N-terminus, the 346-residue chain is Putative F-box/kelch-repeat protein At1g27420 (346 aa).

The F-box domain maps to 9–56 (PIIPGLTDDVAELCVSKIPRSSFQITSQVCRRWRSFLRSQHFAAVRKL). Kelch repeat units lie at residues 62 to 109 (EFLC…VLDG), 111 to 167 (KIVF…EVNG), 168 to 215 (LLYV…AFSS), 217 to 257 (LYAV…VRNK), and 259 to 300 (YFMD…VWNN).

This Arabidopsis thaliana (Mouse-ear cress) protein is Putative F-box/kelch-repeat protein At1g27420.